The sequence spans 679 residues: Glutamine-dependent NAD(+) synthetase (679 aa).

The region spanning 12 to 276 is the CN hydrolase domain; that stretch reads VRVAACTHHT…VRRSVADVDT (265 aa). Residue E52 is the Proton acceptor; for glutaminase activity of the active site. K121 (for glutaminase activity) is an active-site residue. Y127 is a binding site for L-glutamine. The active-site Nucleophile; for glutaminase activity is the C176. L-glutamine contacts are provided by S203 and R209. Positions 337-679 are ligase; the sequence is QQDCYEAYNI…DQIDREVPKG (343 aa). Residue 366-373 participates in ATP binding; the sequence is GVSGGLDS. N456 is a deamido-NAD(+) binding site. An ATP-binding site is contributed by T480. Residues E485, 490–493, and K635 contribute to the deamido-NAD(+) site; that span reads WSTY. The tract at residues 639 to 658 is disordered; the sequence is LPNGPKVSHGGALSPRGDWR.

It in the C-terminal section; belongs to the NAD synthetase family.

It carries out the reaction deamido-NAD(+) + L-glutamine + ATP + H2O = L-glutamate + AMP + diphosphate + NAD(+) + H(+). It participates in cofactor biosynthesis; NAD(+) biosynthesis; NAD(+) from deamido-NAD(+) (L-Gln route): step 1/1. In terms of biological role, catalyzes the ATP-dependent amidation of deamido-NAD to form NAD. Uses L-glutamine as a nitrogen source. The polypeptide is Glutamine-dependent NAD(+) synthetase (Mycobacterium bovis (strain ATCC BAA-935 / AF2122/97)).